A 621-amino-acid polypeptide reads, in one-letter code: Kelch-like protein 40 (621 aa).

In terms of domain architecture, BTB spans 33 to 98 (LDCVVRVGER…LYTSEIALDE (66 aa)). Positions 133–239 (CLAVFRLGLL…PRAFLETRVE (107 aa)) constitute a BACK domain. Positions 265 to 298 (LTTLRKKKKEKGEQTARAKEANQGTEDTKAEDDE) are disordered. Over residues 274–284 (EKGEQTARAKE) the composition is skewed to basic and acidic residues. Kelch repeat units lie at residues 360-412 (QVFV…EALN), 413-462 (AIYV…SHMD), 463-510 (LVYV…VHDG), 512-557 (IFVA…SLAG), and 559-613 (LYAL…PVRL).

The protein belongs to the KLHL40 family. As to quaternary structure, component of the BCR(KLHL40) E3 ubiquitin ligase complex, at least composed of CUL3, KLHL40 and RBX1. Interacts with LMOD3. As to expression, specifically expressed in skeletal muscles in embryonic, neonatal and adults. Expressed in various types of muscles, including extensor digitorum longus, gastrocnemius, soleus, diaphragm, masseter and heart (at protein level). Not detected in brain, liver and lung (at protein level).

It is found in the cytoplasm. The protein localises to the myofibril. The protein resides in the sarcomere. Its subcellular location is the a band. It localises to the i band. Substrate-specific adapter of a BCR (BTB-CUL3-RBX1) E3 ubiquitin ligase complex that acts as a key regulator of skeletal muscle development. The BCR(KLHL40) complex acts by mediating ubiquitination and degradation of TFDP1, thereby regulating the activity of the E2F:DP transcription factor complex. Promotes stabilization of LMOD3 by acting as a negative regulator of LMOD3 ubiquitination; the molecular process by which it negatively regulates ubiquitination of LMOD3 is however unclear. The chain is Kelch-like protein 40 from Mus musculus (Mouse).